A 271-amino-acid polypeptide reads, in one-letter code: 5'-nucleotidase SurE (271 aa).

Asp14, Asp15, Ser46, and Asn104 together coordinate a divalent metal cation.

It belongs to the SurE nucleotidase family. A divalent metal cation is required as a cofactor.

It localises to the cytoplasm. The enzyme catalyses a ribonucleoside 5'-phosphate + H2O = a ribonucleoside + phosphate. Its function is as follows. Nucleotidase that shows phosphatase activity on nucleoside 5'-monophosphates. This chain is 5'-nucleotidase SurE, found in Gloeothece citriformis (strain PCC 7424) (Cyanothece sp. (strain PCC 7424)).